Consider the following 194-residue polypeptide: dITP/XTP pyrophosphatase (194 aa).

Residue 8–13 (TGNPGK) coordinates substrate. The Mg(2+) site is built by glutamate 38 and aspartate 67. The active-site Proton acceptor is aspartate 67. Residues serine 68, 146–149 (FGYD), lysine 169, and 174–175 (HR) contribute to the substrate site.

This sequence belongs to the HAM1 NTPase family. Homodimer. Mg(2+) serves as cofactor.

It catalyses the reaction XTP + H2O = XMP + diphosphate + H(+). It carries out the reaction dITP + H2O = dIMP + diphosphate + H(+). The catalysed reaction is ITP + H2O = IMP + diphosphate + H(+). Functionally, pyrophosphatase that catalyzes the hydrolysis of nucleoside triphosphates to their monophosphate derivatives, with a high preference for the non-canonical purine nucleotides XTP (xanthosine triphosphate), dITP (deoxyinosine triphosphate) and ITP. Seems to function as a house-cleaning enzyme that removes non-canonical purine nucleotides from the nucleotide pool, thus preventing their incorporation into DNA/RNA and avoiding chromosomal lesions. This chain is dITP/XTP pyrophosphatase, found in Synechocystis sp. (strain ATCC 27184 / PCC 6803 / Kazusa).